Consider the following 356-residue polypeptide: Histidinol-phosphate aminotransferase (356 aa).

K210 bears the N6-(pyridoxal phosphate)lysine mark.

This sequence belongs to the class-II pyridoxal-phosphate-dependent aminotransferase family. Histidinol-phosphate aminotransferase subfamily. As to quaternary structure, homodimer. Requires pyridoxal 5'-phosphate as cofactor.

It carries out the reaction L-histidinol phosphate + 2-oxoglutarate = 3-(imidazol-4-yl)-2-oxopropyl phosphate + L-glutamate. Its pathway is amino-acid biosynthesis; L-histidine biosynthesis; L-histidine from 5-phospho-alpha-D-ribose 1-diphosphate: step 7/9. The polypeptide is Histidinol-phosphate aminotransferase (hisC) (Acetobacter pasteurianus (Acetobacter turbidans)).